The chain runs to 603 residues: Autophagy-related protein 13a (603 aa).

Position 248 is a phosphoserine (Ser-248). 2 disordered regions span residues 258–477 (PSPG…DDLD) and 498–518 (SHSL…PLGR). Over residues 301 to 315 (ATPNQSFSPAQSHQL) the composition is skewed to polar residues. Residues 320 to 331 (HDFHWSRTDAFG) are compositionally biased toward basic and acidic residues. Composition is skewed to polar residues over residues 371-386 (IPSS…SNFS) and 419-437 (SSRS…PTQK). Over residues 453 to 473 (LSSSDSPRFAFSRSPSRLSSQ) the composition is skewed to low complexity.

This sequence belongs to the ATG13 family. Plant subfamily. As to quaternary structure, interacts with ATG1A. Interacts with ATG11 and ATG101. Phosphorylated during nutrient starvation. Dephosphorylated in nutrient-rich conditions.

It is found in the cytoplasmic vesicle. The protein resides in the autophagosome. Functionally, involved in autophagy in a nutritional condition dependent manner. The ATG1-ATG13 protein kinase complex regulates downstream events required for autophagosome enclosure and/or vacuolar delivery. Becomes a target of autophagy under nutrient starvation. Connects autophagy to plant nutritional status. In Arabidopsis thaliana (Mouse-ear cress), this protein is Autophagy-related protein 13a.